Consider the following 104-residue polypeptide: Circadian clock oscillator protein KaiB (104 aa).

It belongs to the KaiB family. In terms of assembly, the KaiABC complex composition changes during the circadian cycle to control KaiC phosphorylation. Complexes KaiC(6), KaiA(2-4):KaiC(6), KaiB(6):KaiC(6) and KaiC(6):KaiB(6):KaiA(12) are among the most important forms, many form cooperatively. Undergoes a major conformational rearrangment; in the free state forms homotetramers as a dimer of dimers. When bound to the CI domain of KaiC switches to a monomeric thioredoxin-fold (KaiB(fs)). KaiB(fs) binds CikA, leading it to dephosphorylate phospho-RpaA.

Functionally, key component of the KaiABC oscillator complex, which constitutes the main circadian regulator in cyanobacteria. Complex composition changes during the circadian cycle to control KaiC phosphorylation. KaiA stimulates KaiC autophosphorylation, while KaiB sequesters KaiA, leading to KaiC autodephosphorylation. Phospho-Ser-431 KaiC accumulation triggers binding of KaiB to form the KaiB(6):KaiC(6) complex, leading to changes in output regulators CikA and SasA. KaiB switches to a thioredoxin-like fold (KaiB(fs)) when bound to KaiC. KaiB(6):KaiC(6) formation exposes a site for KaiA binding that sequesters KaiA from KaiC, making the KaiC(6):KaiB(6):KaiA(12) complex that results in KaiC autodephosphorylation. In terms of biological role, a metamorphic protein which reversibly switches between an inactive tetrameric fold and a rare, thioredoxin-like monomeric fold (KaiB(fs)). KaiB(fs) binds phospho-KaiC, KaiA and CikA. KaiA and CikA compete for binding to KaiB(fs), and KaiB(fs) and SasA compete for binding to KaiC, thus the clock oscillator and output signal pathway are tightly coupled. In Rippkaea orientalis (strain PCC 8801 / RF-1) (Cyanothece sp. (strain PCC 8801)), this protein is Circadian clock oscillator protein KaiB.